We begin with the raw amino-acid sequence, 513 residues long: MPYLLEMKNITKTFGSVKAIDNVSLRLNAGEIVSLCGENGSGKSTLMKVLCGIYPHGSYEGEIIFAGEEIQASHIRDTERKGIAIIHQELALVKELTVLENIFLGNEITHNGIMDYDLMTLRYQKLLAQVSLSISPDTRVGDLGLGQQQLVEIAKALNKQVRLLILDEPTASLTEQETSVLLDIIRDLQQHGIACIYISHKLNEVKAISDTICVIRDGQHIGTRDAAGMSEDDIITMMVERELTAIYPNEPHTTGDEILRIEHLTAWHPVNRHIKRVNDVSFSLKRGEILGIAGLVGAGRTETIQCLFGVWPGQWEGKIYIDGKQVDIRNCQQAITQGIAMVPEDRKRDGIVPVMAVGKNITLAALNKFTGGISQLDDAAEQKCILESIQQLKVKTSSPDLAIGRLSGGNQQKAILARCLLLNPRILILDEPTRGIDIGAKYEIYKLINQLVQQGIAVIVISSELPEVLGLSDRVLVMHEGKLKANLINHNLTQEQVMEAALRSEHHVEKQSV.

2 consecutive ABC transporter domains span residues 5–242 and 259–505; these read LEMK…VERE and LRIE…LRSE. 37–44 lines the ATP pocket; the sequence is GENGSGKS.

The protein belongs to the ABC transporter superfamily. Xylose importer (TC 3.A.1.2.4) family. In terms of assembly, the complex is composed of two ATP-binding proteins (XylG), two transmembrane proteins (XylH) and a solute-binding protein (XylF).

It localises to the cell inner membrane. The catalysed reaction is D-xylose(out) + ATP + H2O = D-xylose(in) + ADP + phosphate + H(+). Its function is as follows. Part of the ABC transporter complex XylFGH involved in xylose import. Responsible for energy coupling to the transport system. This Shigella flexneri protein is Xylose import ATP-binding protein XylG.